We begin with the raw amino-acid sequence, 381 residues long: MTAATLVTLALSLSLAQHDAAPAPVAAPVEQHGQAPEAAPDAHGSPAGEPGAAVEAHAAAAEHGEAAGHEGGHDESLGAVMLHHVTDGYVIEHPGLCHGGLAWNCEWDLRETFGDSLKFGKLDMTPTKHVVMMWLASALLLVVVLGAVRKKSLVPRGLYNFIELLVAFVRNEIAVKNMGEKDADRFTPYLVTAFFFILFLNLFGLLPFSATATANLSVTVAMALFTFVITQYAAIRAMGMGGYLAHLTGGVPKSLAPLWLIMIPVEFLGLFTKPFALTVRLFANMLAGHFVILALLGLIFALGTPWVAFGSVPMALSIFLLELFVAFVQAYIFTMLSSLFIGAGLVHHGDDHGHAEEHGHAGPAAGSEHGSHVAGASPGHG.

A disordered region spans residues 24 to 73 (PVAAPVEQHGQAPEAAPDAHGSPAGEPGAAVEAHAAAAEHGEAAGHEGGH). Residues 47–59 (AGEPGAAVEAHAA) show a composition bias toward low complexity. Over residues 60-73 (AAEHGEAAGHEGGH) the composition is skewed to basic and acidic residues. The next 6 helical transmembrane spans lie at 128–148 (KHVVMMWLASALLLVVVLGAV), 190–210 (LVTAFFFILFLNLFGLLPFSA), 215–235 (NLSVTVAMALFTFVITQYAAI), 255–275 (LAPLWLIMIPVEFLGLFTKPF), 290–310 (FVILALLGLIFALGTPWVAFG), and 316–336 (LSIFLLELFVAFVQAYIFTML). Over residues 351 to 360 (DHGHAEEHGH) the composition is skewed to basic and acidic residues. The disordered stretch occupies residues 351–381 (DHGHAEEHGHAGPAAGSEHGSHVAGASPGHG).

The protein belongs to the ATPase A chain family. F-type ATPases have 2 components, CF(1) - the catalytic core - and CF(0) - the membrane proton channel. CF(1) has five subunits: alpha(3), beta(3), gamma(1), delta(1), epsilon(1). CF(0) has three main subunits: a(1), b(2) and c(9-12). The alpha and beta chains form an alternating ring which encloses part of the gamma chain. CF(1) is attached to CF(0) by a central stalk formed by the gamma and epsilon chains, while a peripheral stalk is formed by the delta and b chains.

The protein localises to the cell inner membrane. Functionally, key component of the proton channel; it plays a direct role in the translocation of protons across the membrane. The protein is ATP synthase subunit a of Anaeromyxobacter dehalogenans (strain 2CP-C).